The sequence spans 531 residues: Multidrug resistance protein fnx1 (531 aa).

At 1-30 (MVDQVNLATEQTSLLYPEVSRKKEELSVNK) the chain is on the cytoplasmic side. The chain crosses the membrane as a helical span at residues 31 to 51 (WTILPALWVGGFLSALDMTIV). Over 52–225 (ASLYPVIGSE…NASLLSRIDY (174 aa)) the chain is Lumenal. Residues 226–246 (LGSFLLVTGITALVVTFNMGG) traverse the membrane as a helical segment. The Cytoplasmic portion of the chain corresponds to 247-252 (DAFPWV). Residues 253–273 (SPVIITLLVSSVLILFAFYWV) traverse the membrane as a helical segment. Topologically, residues 274 to 297 (EKNIAVEPIAPVEILSQPTPLNVC) are lumenal. The chain crosses the membrane as a helical span at residues 298–318 (LGNFFNAFCSFVIVYELPLFF). Residues 319-360 (ETTLLMPSSEAGVRIFPYVISTSVGSLCSGLYMKKTGRYRNL) lie on the Cytoplasmic side of the membrane. Residues 361–381 (VIAGFFFMLMGIVSFAVLTSF) form a helical membrane-spanning segment. Topologically, residues 382 to 385 (GHRT) are lumenal. A helical transmembrane segment spans residues 386 to 406 (PLILISLCLAMTGCSYGMNLT). At 407–496 (STLIAIISSL…QKLVIKSYAT (90 aa)) the chain is on the cytoplasmic side. Residues 497-517 (AFTWTFALVAIIAFAGFWCSL) form a helical membrane-spanning segment. At 518 to 531 (RIKQFYLHTSVDRS) the chain is on the lumenal side.

Belongs to the major facilitator superfamily.

It is found in the vacuole membrane. Functionally, efflux transporter. Confers resistance to a variety of toxic compounds. This chain is Multidrug resistance protein fnx1 (fnx1), found in Schizosaccharomyces pombe (strain 972 / ATCC 24843) (Fission yeast).